The primary structure comprises 234 residues: dTDP-4-amino-4,6-dideoxyglucose formyltransferase (234 aa).

DTDP-4-amino-4,6-dideoxy-alpha-D-glucose-binding positions include Asn9 and 62 to 64 (HCK). 65-67 (QRF) is a binding site for (6R)-10-formyltetrahydrofolate. Catalysis depends on His81, which acts as the Proton acceptor. 90–94 (GWFPQ) contacts dTDP-4-amino-4,6-dideoxy-alpha-D-glucose. Residues Asp112, Asp116, and Lys175 each contribute to the (6R)-10-formyltetrahydrofolate site. Residue Asn209 participates in dTDP-4-amino-4,6-dideoxy-alpha-D-glucose binding.

This sequence belongs to the dTDP-Qui4N formyltransferase family. In terms of assembly, homodimer.

The catalysed reaction is dTDP-4-amino-4,6-dideoxy-alpha-D-glucose + (6R)-10-formyltetrahydrofolate = dTDP-4-formamido-4,6-dideoxy-alpha-D-glucose + (6S)-5,6,7,8-tetrahydrofolate + H(+). Functionally, sugar N-formyltransferase that catalyzes the conversion of dTDP-4-amino-4,6-dideoxyglucose into dTDP-4-formamido-4,6-dideoxyglucose using N(10)-formyltetrahydrofolate as the carbon source. Plays a role in virulence. The sequence is that of dTDP-4-amino-4,6-dideoxyglucose formyltransferase from Mycobacterium bovis (strain ATCC BAA-935 / AF2122/97).